An 83-amino-acid chain; its full sequence is U15-theraphotoxin-Cg1a (83 aa).

Positions 1–21 (MKAAILLAFAGLALLSVICHA) are cleaved as a signal peptide. A propeptide spanning residues 22–49 (SENVEQDSFEEVFSAIFAMEDDLKPKER) is cleaved from the precursor. Intrachain disulfides connect Cys-51–Cys-66, Cys-58–Cys-71, and Cys-65–Cys-77. Ala-81 is modified (alanine amide).

The protein belongs to the neurotoxin 10 (Hwtx-1) family. 66 (Jztx-24) subfamily. As to expression, expressed by the venom gland.

It is found in the secreted. Probable ion channel inhibitor. The sequence is that of U15-theraphotoxin-Cg1a from Chilobrachys guangxiensis (Chinese earth tiger tarantula).